The primary structure comprises 359 residues: Cytochrome c oxidase subunit 2 (359 aa).

A signal peptide spans 1 to 28 (MEQQNKRGLKRKALLGGVLGLGGLAMAG). Cys-29 carries the S-diacylglycerol cysteine lipid modification. A run of 2 helical transmembrane segments spans residues 64–84 (VWVA…TAIF) and 107–127 (VPLE…LFFF). The segment at 168 to 203 (PGGQDYQGSDPERQAAAEASKKDPSGDNPIHGNSKS) is disordered. Residues 177 to 192 (DPERQAAAEASKKDPS) show a composition bias toward basic and acidic residues. Cu cation-binding residues include His-244, Cys-285, Glu-287, Cys-289, His-293, and Met-296. Positions 335 to 359 (YATSTSPFVSDRTATRDGENTQSNA) are disordered.

In terms of assembly, associates with subunits I, III and IV to form cytochrome c oxidase. The 4 subunit cytochrome c oxidase forms a supercomplex with the menaquinol-cytochrome c reductase complex (cytochrome bc1). Binuclear copper center (CuA) serves as cofactor.

The protein localises to the cell membrane. The catalysed reaction is 4 Fe(II)-[cytochrome c] + O2 + 8 H(+)(in) = 4 Fe(III)-[cytochrome c] + 2 H2O + 4 H(+)(out). Subunits I and II form the functional core of the enzyme complex. Electrons originating in cytochrome c are transferred via heme a and Cu(A) to the binuclear center formed by heme a3 and Cu(B). In Corynebacterium glutamicum (strain ATCC 13032 / DSM 20300 / JCM 1318 / BCRC 11384 / CCUG 27702 / LMG 3730 / NBRC 12168 / NCIMB 10025 / NRRL B-2784 / 534), this protein is Cytochrome c oxidase subunit 2 (ctaC).